We begin with the raw amino-acid sequence, 587 residues long: 65-kDa microtubule-associated protein 1 (587 aa).

Coiled coils occupy residues 46-84 (QECL…TMSL), 151-181 (DESD…LRKV), 234-257 (LTLK…LIDL), 290-317 (ALAR…MKEI), and 461-489 (AMLD…VQEQ). Residues 474-494 (EEEKRRLREQKKVQEQPHVEQ) show a composition bias toward basic and acidic residues. Residues 474-587 (EEEKRRLREQ…AADHQVPASP (114 aa)) form a disordered region. S503 carries the phosphoserine modification. T526 carries the post-translational modification Phosphothreonine. Positions 531–542 (LSLNANQNGSRS) are enriched in polar residues. Residues S532 and S540 each carry the phosphoserine modification. 2 positions are modified to phosphothreonine: T543 and T552. The segment covering 543 to 553 (TAKEAGRRETL) has biased composition (basic and acidic residues). Residues S573, S576, and S586 each carry the phosphoserine modification.

This sequence belongs to the MAP65/ASE1 family. As to quaternary structure, forms dimer. Binds to MT, mostly with coaligned MT, both between parallel or antiparallel, forming thick bundles. Interacts with the alpha-tubulin subunit of the tubulin heterodimer. Bundles polymerized MT via the formation of 25-nm crossbridges at specific stages of the cell cycle (e.g. bundles microtubules in interphase, anaphase and telophase but does not bind microtubules in prophase or metaphase), at the plus-end, the minus-end, or along the entire length of MT, and along phragmoplast MT. Interacts with SH3P1 and MPK4. Post-translationally, basal phosphorylation at all stages of the cell cycle. MT-binding properties inhibited by hyperphosphorylation mediated by CDKs and/or MAPKs (e.g. ANP2, ANP3, MPK4 and MPK6) during prometaphase and metaphase. As to expression, expressed in all organs and tissues with the exception of sepals and anthers. Bound to subsets of microtubules in the cells of root epidermis, hypocotyl and cotyledons (at protein level).

The protein localises to the nucleus. The protein resides in the cytoplasm. It localises to the cytoskeleton. It is found in the spindle. Its subcellular location is the phragmoplast. The protein localises to the cell cortex. Functionally, microtubule-associated protein that bundle and stabilize adjacent microtubules (MT) of the cell cortex. Enhances MT nucleation. Can also bind to tubulin dimers and promotes their polymerization. Confers MT resistance to the drug propyzamide and cold conditions. Plays a role in the central spindle at anaphase to early cytokinesis but is not essential at the midline of the phragmoplast at later stages. Represses metaphase spindle organization and the transition to anaphase in dephosphorylated active form. Promotes the formation of a planar network of antiparallel microtubules. May be involved in stomatal movement modulation by regulating the dynamic and arrangement of cortical MT. The sequence is that of 65-kDa microtubule-associated protein 1 (MAP65-1) from Arabidopsis thaliana (Mouse-ear cress).